Here is a 244-residue protein sequence, read N- to C-terminus: uncharacterized protein (244 aa).

The HTH gntR-type domain occupies 7–74 (VKEKDQVVAH…YHRGAFIERF (68 aa)). Residues 34 to 53 (RNEIAHGLGVSRVPIQEALV) constitute a DNA-binding region (H-T-H motif).

This is an uncharacterized protein from Mycobacterium tuberculosis (strain CDC 1551 / Oshkosh).